A 210-amino-acid chain; its full sequence is Imidazole glycerol phosphate synthase subunit HisH (210 aa).

The Glutamine amidotransferase type-1 domain maps to 3–210; that stretch reads TIAIIDYGMG…ILKNFALSKA (208 aa). Catalysis depends on cysteine 81, which acts as the Nucleophile. Active-site residues include histidine 190 and glutamate 192.

As to quaternary structure, heterodimer of HisH and HisF.

The protein localises to the cytoplasm. It carries out the reaction 5-[(5-phospho-1-deoxy-D-ribulos-1-ylimino)methylamino]-1-(5-phospho-beta-D-ribosyl)imidazole-4-carboxamide + L-glutamine = D-erythro-1-(imidazol-4-yl)glycerol 3-phosphate + 5-amino-1-(5-phospho-beta-D-ribosyl)imidazole-4-carboxamide + L-glutamate + H(+). It catalyses the reaction L-glutamine + H2O = L-glutamate + NH4(+). It participates in amino-acid biosynthesis; L-histidine biosynthesis; L-histidine from 5-phospho-alpha-D-ribose 1-diphosphate: step 5/9. In terms of biological role, IGPS catalyzes the conversion of PRFAR and glutamine to IGP, AICAR and glutamate. The HisH subunit catalyzes the hydrolysis of glutamine to glutamate and ammonia as part of the synthesis of IGP and AICAR. The resulting ammonia molecule is channeled to the active site of HisF. This Geobacter metallireducens (strain ATCC 53774 / DSM 7210 / GS-15) protein is Imidazole glycerol phosphate synthase subunit HisH.